The primary structure comprises 146 residues: Regulator of ribonuclease activity B (146 aa).

Residues 110–146 (WGTYFEDPDGEEEEGDEFDQDDEDGPADRDEVPATRH) are disordered. Residues 115 to 134 (EDPDGEEEEGDEFDQDDEDG) show a composition bias toward acidic residues. Over residues 135 to 146 (PADRDEVPATRH) the composition is skewed to basic and acidic residues.

Belongs to the RraB family. In terms of assembly, interacts with the C-terminal region of Rne.

It is found in the cytoplasm. Functionally, globally modulates RNA abundance by binding to RNase E (Rne) and regulating its endonucleolytic activity. Can modulate Rne action in a substrate-dependent manner by altering the composition of the degradosome. The protein is Regulator of ribonuclease activity B of Sodalis glossinidius (strain morsitans).